Here is a 336-residue protein sequence, read N- to C-terminus: tRNA (guanine(37)-N(1))-methyltransferase Trm5b (336 aa).

Residues R186, D223–I224, D251–V252, and N265 each bind S-adenosyl-L-methionine.

The protein belongs to the class I-like SAM-binding methyltransferase superfamily. TRM5/TYW2 family. As to quaternary structure, monomer.

It is found in the cytoplasm. It carries out the reaction guanosine(37) in tRNA + S-adenosyl-L-methionine = N(1)-methylguanosine(37) in tRNA + S-adenosyl-L-homocysteine + H(+). In terms of biological role, specifically methylates the N1 position of guanosine-37 in various tRNAs. The polypeptide is tRNA (guanine(37)-N(1))-methyltransferase Trm5b (trm5b) (Methanocaldococcus jannaschii (strain ATCC 43067 / DSM 2661 / JAL-1 / JCM 10045 / NBRC 100440) (Methanococcus jannaschii)).